Consider the following 459-residue polypeptide: DNA primase large subunit (459 aa).

[4Fe-4S] cluster-binding residues include C291, C369, C386, and C428.

The protein belongs to the eukaryotic-type primase large subunit family. As to quaternary structure, heterodimer of a catalytic subunit spp1/pri1 and a regulatory subunit spp2/pri2, also known as the DNA primase complex. Component of the alpha DNA polymerase complex (also known as the alpha DNA polymerase-primase complex) consisting of four subunits: the catalytic subunit pol1, the accessory subunit spb70/pol12, and the primase complex subunits spp1/pri1 and spp2/pri2 respectively. Interacts with orc2; preferentially associates with the unphosphorylated orc2 in G1 pre-Start prior to orc2 being phosphorylated by cdc2, the interaction is mediated by spb70 and might enable the association of the whole alpha DNA polymerase complex to orc2/spb70 complex on chromatin. Requires [4Fe-4S] cluster as cofactor.

The protein localises to the nucleus. The protein resides in the chromosome. In terms of biological role, regulatory subunit of the DNA primase complex and component of the DNA polymerase alpha complex (also known as the alpha DNA polymerase-primase complex - primosome/replisome) which play an essential role in the initiation of DNA synthesis. During the S phase of the cell cycle, the DNA polymerase alpha complex (composed of a catalytic subunit pol1, an accessory subunit spb70/pol12 and two primase subunits, the catalytic subunit spp1/pri1 and the regulatory subunit spp2/pri2) is recruited to DNA at the replicative forks. The primase subunit of the polymerase alpha complex initiates DNA synthesis by oligomerising short RNA primers on both leading and lagging strands. This Schizosaccharomyces pombe (strain 972 / ATCC 24843) (Fission yeast) protein is DNA primase large subunit.